A 675-amino-acid polypeptide reads, in one-letter code: Methionine--tRNA ligase (675 aa).

Positions 15–25 (PYANGSIHLGH) match the 'HIGH' region motif. Zn(2+) is bound by residues C146, C149, C159, and C162. Residues 332–336 (KMSKS) carry the 'KMSKS' region motif. K335 contacts ATP. Residues 573 to 675 (DFAKVDMRIA…SGAQPGMQVK (103 aa)) enclose the tRNA-binding domain.

Belongs to the class-I aminoacyl-tRNA synthetase family. MetG type 1 subfamily. As to quaternary structure, homodimer. The cofactor is Zn(2+).

It localises to the cytoplasm. It catalyses the reaction tRNA(Met) + L-methionine + ATP = L-methionyl-tRNA(Met) + AMP + diphosphate. Its function is as follows. Is required not only for elongation of protein synthesis but also for the initiation of all mRNA translation through initiator tRNA(fMet) aminoacylation. The polypeptide is Methionine--tRNA ligase (Yersinia pestis bv. Antiqua (strain Angola)).